A 252-amino-acid polypeptide reads, in one-letter code: 5-oxoprolinase subunit A (252 aa).

Belongs to the LamB/PxpA family. In terms of assembly, forms a complex composed of PxpA, PxpB and PxpC.

It carries out the reaction 5-oxo-L-proline + ATP + 2 H2O = L-glutamate + ADP + phosphate + H(+). Functionally, catalyzes the cleavage of 5-oxoproline to form L-glutamate coupled to the hydrolysis of ATP to ADP and inorganic phosphate. This Staphylococcus carnosus (strain TM300) protein is 5-oxoprolinase subunit A.